The sequence spans 663 residues: Nucleolar complex-associated protein 3 (663 aa).

The segment at 1-132 is disordered; it reads MAKRNRSQFR…AKEDEPDTEE (132 aa). The span at 82–97 shows a compositional bias: basic and acidic residues; the sequence is GKVERKLHKAQEKPKD. The span at 98–130 shows a compositional bias: acidic residues; it reads DDEEDEDSNDSSEDDEGPNEEQEAEAKEDEPDT. A coiled-coil region spans residues 363–408; that stretch reads KKDRVHLSKKQRKARKEMQQIEEEMRNAEQAVSAEERERNQSEILK. Ser395 bears the Phosphoserine mark.

The protein belongs to the CBF/MAK21 family. Forms a heterodimer with NOC2. This complex may be associated with pre-ribosomal particles. Also interacts with MCM2, MCM5 and ORC1.

It is found in the nucleus. The protein resides in the nucleolus. In terms of biological role, required for synthesis of 60S ribosomal subunits and the transport of pre-ribosomes from the nucleoplasm to the cytoplasm. Also required for initiation of DNA replication. May function downstream of the origin recognition complex (ORC complex) in the loading of CDC6 and the minichromosome maintenance complex (MCM complex) onto chromatin during the G1 phase of the cell cycle. Essential for growth. This is Nucleolar complex-associated protein 3 (NOC3) from Saccharomyces cerevisiae (strain ATCC 204508 / S288c) (Baker's yeast).